The following is a 1205-amino-acid chain: Bromodomain and PHD finger-containing protein 3 (1205 aa).

2 disordered regions span residues 1–27 (MRKP…KCSP) and 75–121 (NSNK…SFRM). Phosphoserine is present on Ser17. A compositionally biased stretch (polar residues) spans 75–84 (NSNKENSEQP). The span at 89–99 (KSKKPSSKGKK) shows a compositional bias: basic residues. The PHD-type 1 zinc finger occupies 212 to 262 (DAFCCVCLDDECHNSNVILFCDICNLAVHQECYGVPYIPEGQWLCRCCLQS). The segment at 266–299 (PVDCILCPNKGGAFKQTSDGHWAHVVCAIWIPEV) adopts a C2HC pre-PHD-type zinc-finger fold. A PHD-type 2 zinc finger spans residues 323–387 (LTCYICKQKG…RKTAYCEAHS (65 aa)). The disordered stretch occupies residues 387–472 (SPPGAATARR…AGQDTPSTLP (86 aa)). 2 positions are modified to phosphoserine: Ser400 and Ser403. Acidic residues predominate over residues 417–432 (DGEEEEEEEVEEEEQE). The span at 444-456 (VPKKSKMSLKQKI) shows a compositional bias: basic residues. Residues Lys447, Lys449, and Lys671 each carry the N6-acetyllysine modification. The Bromo domain occupies 589–693 (LELMPFNVLL…DLGGAILRHA (105 aa)). Phosphoserine occurs at positions 713 and 740. The tract at residues 779 to 897 (RQKLAQPPPP…LQLGNEPLQR (119 aa)) is disordered. The segment covering 817–827 (LQEEPEDDGDR) has biased composition (acidic residues). The span at 839 to 851 (EPTGPAPSLSEQE) shows a compositional bias: low complexity. Phosphoserine is present on Ser900. 2 disordered regions span residues 907–926 (LSLM…VGRR) and 931–1015 (FKKA…SECS). The segment covering 942-955 (RSPDRVLENGEDHG) has biased composition (basic and acidic residues). Residues Ser962 and Ser965 each carry the phosphoserine modification. Residues 980-991 (SCSESEGERSPQ) show a composition bias toward basic and acidic residues. The PWWP domain maps to 1076 to 1159 (PLELVWAKCR…RDKVLPLGVE (84 aa)).

As to quaternary structure, component of some HBO1 complex composed of KAT7/HBO1, MEAF6, ING4 or ING5, and BRPF3. Component of the MOZ/MORF complex composed at least of ING5, KAT6A, KAT6B, MEAF6 and one of BRPF1, BRD1/BRPF2 and BRPF3. Interacts with KAT7/HBO1; the interaction is direct.

It is found in the nucleus. Its function is as follows. Scaffold subunit of various histone acetyltransferase (HAT) complexes, such as the MOZ/MORF and HBO1 complexes, which have a histone H3 acetyltransferase activity. Plays a role in DNA replication initiation by directing KAT7/HBO1 specificity towards histone H3 'Lys-14' acetylation (H3K14ac), thereby facilitating the activation of replication origins. Component of the MOZ/MORF complex which has a histone H3 acetyltransferase activity. The sequence is that of Bromodomain and PHD finger-containing protein 3 from Homo sapiens (Human).